Here is a 164-residue protein sequence, read N- to C-terminus: CDP-archaeol synthase (164 aa).

4 consecutive transmembrane segments (helical) span residues L3 to A23, G53 to P73, L77 to I97, and S126 to I146.

This sequence belongs to the CDP-archaeol synthase family. Mg(2+) is required as a cofactor.

Its subcellular location is the cell membrane. It catalyses the reaction 2,3-bis-O-(geranylgeranyl)-sn-glycerol 1-phosphate + CTP + H(+) = CDP-2,3-bis-O-(geranylgeranyl)-sn-glycerol + diphosphate. It participates in membrane lipid metabolism; glycerophospholipid metabolism. Its function is as follows. Catalyzes the formation of CDP-2,3-bis-(O-geranylgeranyl)-sn-glycerol (CDP-archaeol) from 2,3-bis-(O-geranylgeranyl)-sn-glycerol 1-phosphate (DGGGP) and CTP. This reaction is the third ether-bond-formation step in the biosynthesis of archaeal membrane lipids. This is CDP-archaeol synthase from Pyrobaculum arsenaticum (strain DSM 13514 / JCM 11321 / PZ6).